A 634-amino-acid polypeptide reads, in one-letter code: DNA-directed RNA polymerase subunit gamma (634 aa).

Zn(2+) is bound by residues Cys74, Cys76, Cys89, and Cys92. Mg(2+) is bound by residues Asp471, Asp473, and Asp475.

The protein belongs to the RNA polymerase beta' chain family. RpoC1 subfamily. In cyanobacteria the RNAP catalytic core is composed of 2 alpha, 1 beta, 1 beta', 1 gamma and 1 omega subunit. When a sigma factor is associated with the core the holoenzyme is formed, which can initiate transcription. It depends on Mg(2+) as a cofactor. The cofactor is Zn(2+).

The catalysed reaction is RNA(n) + a ribonucleoside 5'-triphosphate = RNA(n+1) + diphosphate. Its function is as follows. DNA-dependent RNA polymerase catalyzes the transcription of DNA into RNA using the four ribonucleoside triphosphates as substrates. This Prochlorococcus marinus (strain MIT 9313) protein is DNA-directed RNA polymerase subunit gamma.